Reading from the N-terminus, the 219-residue chain is tRNA (guanine-N(7)-)-methyltransferase (219 aa).

S-adenosyl-L-methionine is bound by residues aspartate 47, glutamate 72, asparagine 99, and aspartate 125. Residue aspartate 125 is part of the active site. The substrate site is built by lysine 129 and aspartate 161.

Belongs to the class I-like SAM-binding methyltransferase superfamily. TrmB family.

It catalyses the reaction guanosine(46) in tRNA + S-adenosyl-L-methionine = N(7)-methylguanosine(46) in tRNA + S-adenosyl-L-homocysteine. It functions in the pathway tRNA modification; N(7)-methylguanine-tRNA biosynthesis. Functionally, catalyzes the formation of N(7)-methylguanine at position 46 (m7G46) in tRNA. The chain is tRNA (guanine-N(7)-)-methyltransferase from Nostoc sp. (strain PCC 7120 / SAG 25.82 / UTEX 2576).